The sequence spans 122 residues: Acidic phospholipase A2 homolog vipoxin A chain (122 aa).

Intrachain disulfides connect C26-C115, C28-C44, C43-C95, C49-C122, C50-C88, C57-C81, and C75-C86.

This sequence belongs to the phospholipase A2 family. Group II subfamily. D49 sub-subfamily. As to quaternary structure, heterodimer of A and B (AC P14420) chains; non-covalently linked. The A chain (acidic) is non-toxic, and increases the toxicity of the B chain (basic). The A chain may act as factor stabilizing the complex structure and hence retaining its toxicity by preventing non-specific binding. Upon binding to the target membranes the A chain may dissociate. In terms of tissue distribution, expressed by the venom gland.

The protein resides in the secreted. Functionally, heterodimer: postsynaptic neurotoxin. Monomer: Acidic phospholipase A2 homolog that is non-toxic. The protein is Acidic phospholipase A2 homolog vipoxin A chain of Vipera ammodytes meridionalis (Eastern sand viper).